The chain runs to 273 residues: Large ribosomal subunit protein uL2 (273 aa).

A disordered region spans residues 224-264 (AMNPVDHPHGGGEGRNFGKHPVTPWGIQTKGKKTRKNKRTD). Basic residues predominate over residues 253–264 (KGKKTRKNKRTD).

Belongs to the universal ribosomal protein uL2 family. Part of the 50S ribosomal subunit. Forms a bridge to the 30S subunit in the 70S ribosome.

One of the primary rRNA binding proteins. Required for association of the 30S and 50S subunits to form the 70S ribosome, for tRNA binding and peptide bond formation. It has been suggested to have peptidyltransferase activity; this is somewhat controversial. Makes several contacts with the 16S rRNA in the 70S ribosome. The sequence is that of Large ribosomal subunit protein uL2 from Buchnera aphidicola subsp. Acyrthosiphon pisum (strain 5A).